Consider the following 464-residue polypeptide: Chromosomal replication initiator protein DnaA (464 aa).

A domain I, interacts with DnaA modulators region spans residues 1-82 (MSLSLWQQCL…LLRFEVGSKP (82 aa)). The interval 82–127 (PPQMAVLQPASQHASEAPSQAAVARPRPSRPSWDNAPVQPELSYRS) is domain II. Positions 91 to 118 (ASQHASEAPSQAAVARPRPSRPSWDNAP) are disordered. The domain III, AAA+ region stretch occupies residues 128–344 (NVNPKHNFDN…GALNRVIANA (217 aa)). ATP is bound by residues glycine 172, glycine 174, lysine 175, and threonine 176. Positions 345–464 (NFTGRAITID…FSNLIRTLSS (120 aa)) are domain IV, binds dsDNA.

The protein belongs to the DnaA family. As to quaternary structure, oligomerizes as a right-handed, spiral filament on DNA at oriC.

The protein localises to the cytoplasm. In terms of biological role, plays an essential role in the initiation and regulation of chromosomal replication. ATP-DnaA binds to the origin of replication (oriC) to initiate formation of the DNA replication initiation complex once per cell cycle. Binds the DnaA box (a 9 base pair repeat at the origin) and separates the double-stranded (ds)DNA. Forms a right-handed helical filament on oriC DNA; dsDNA binds to the exterior of the filament while single-stranded (ss)DNA is stabiized in the filament's interior. The ATP-DnaA-oriC complex binds and stabilizes one strand of the AT-rich DNA unwinding element (DUE), permitting loading of DNA polymerase. After initiation quickly degrades to an ADP-DnaA complex that is not apt for DNA replication. Binds acidic phospholipids. In Sodalis glossinidius (strain morsitans), this protein is Chromosomal replication initiator protein DnaA.